A 373-amino-acid chain; its full sequence is Chloroperoxidase (373 aa).

Positions 1-20 (MFSKVLPFVGAVAALPHSVR) are cleaved as a signal peptide. Glutamine 21 carries the pyrrolidone carboxylic acid modification. N-linked (GlcNAc...) asparagine glycosylation is present at asparagine 33. Residue cysteine 50 participates in heme binding. A disulfide bridge links cysteine 100 with cysteine 108. N-linked (GlcNAc...) asparagine glycosylation is present at asparagine 114. Residues glutamate 125, histidine 126, and serine 129 each coordinate Mn(2+). Residue glutamate 204 is part of the active site. An N-linked (GlcNAc...) asparagine glycan is attached at asparagine 237. Threonine 259 is a glycosylation site (O-linked (Man) threonine). Residues serine 260, serine 262, serine 263, and serine 269 are each glycosylated (O-linked (Man) serine). Residue threonine 271 is glycosylated (O-linked (Man) threonine). A glycan (O-linked (Man) serine) is linked at serine 272. A glycan (O-linked (Man) threonine) is linked at threonine 273. Residues threonine 296, threonine 304, and threonine 314 are each glycosylated (O-linked (Man...) threonine). Residues 322-373 (EAAPAATTSMAVFKNPYLEAIGTQDIKNQQAYVSSKAAAMASAMAANKARNL) constitute a propeptide that is removed on maturation.

The protein belongs to the chloroperoxidase family. It depends on heme b as a cofactor. Mn(2+) is required as a cofactor. In terms of processing, N- and O-glycosylated.

The catalysed reaction is RH + Cl(-) + H2O2 = RCl + 2 H2O.. In terms of biological role, catalyzes peroxidative halogenations involved in the biosynthesis of clardariomycin (2,2-dichloro-1,3-cyclo-pentenedione). The enzyme also has potent catalase activity and in the absence of halide ion, acts as a peroxidase similar to plant peroxidases. The protein is Chloroperoxidase (CPO) of Leptoxyphium fumago (Caldariomyces fumago).